Reading from the N-terminus, the 441-residue chain is MTAPTAIRRLNAADPDFAHHLDHLLSWESVSDDSVNQRVLDIIKAVRERGDAALVEFTQKFDGLEVASMADLILPRERLELALTRITVAQREALEKAAARVRSYHEKQKQDSWSYTEADGTVLGQKVTPLDRAGLYVPGGKASYPSSVLMNAIPAKVAGVTEVVMVVPTPRGEVNELVLAAACIAGVDRVFTIGGAQAVAALAYGTESVPQVDKVVGPGNIYVATAKRHVFGQVGIDMIAGPSEILVVCDGQTDPDWIAMDLFSQAEHDEDAQAILVSPDAEFLDKVAASIDKLLPTMDRATIIETSINGRGALIHVRDMAQAIEVANRIAPEHLELSVADPQAWLPQIRHAGAIFMGRHTSEALGDYCAGPNHVLPTSGTARFSSPLGVYDFQKRSSIIFCSEAGASELGKTASILARGESLSAHARSAEYRIKDDVKGN.

Residues Tyr-136, Gln-197, and Asn-220 each contribute to the NAD(+) site. Substrate-binding residues include Ser-243, Gln-265, and His-268. Zn(2+) is bound by residues Gln-265 and His-268. Catalysis depends on proton acceptor residues Glu-333 and His-334. Substrate-binding residues include His-334, Asp-367, Glu-421, and His-426. A Zn(2+)-binding site is contributed by Asp-367. His-426 is a Zn(2+) binding site.

This sequence belongs to the histidinol dehydrogenase family. Zn(2+) is required as a cofactor.

It catalyses the reaction L-histidinol + 2 NAD(+) + H2O = L-histidine + 2 NADH + 3 H(+). Its pathway is amino-acid biosynthesis; L-histidine biosynthesis; L-histidine from 5-phospho-alpha-D-ribose 1-diphosphate: step 9/9. Its function is as follows. Catalyzes the sequential NAD-dependent oxidations of L-histidinol to L-histidinaldehyde and then to L-histidine. This Pseudomonas fluorescens (strain Pf0-1) protein is Histidinol dehydrogenase.